A 492-amino-acid chain; its full sequence is Histone-lysine N-methyltransferase PRDM7 (492 aa).

A disordered region spans residues methionine 1–proline 22. Positions methionine 23–aspartate 86 constitute a KRAB-related domain. The tract at residues glutamate 111 to lysine 179 is disordered. The span at glycine 135–lysine 150 shows a compositional bias: polar residues. Residues leucine 167–lysine 179 are compositionally biased toward basic and acidic residues. The SET domain maps to proline 244–glycine 358.

It is found in the nucleus. Its subcellular location is the chromosome. It carries out the reaction N(6),N(6)-dimethyl-L-lysyl(4)-[histone H3] + S-adenosyl-L-methionine = N(6),N(6),N(6)-trimethyl-L-lysyl(4)-[histone H3] + S-adenosyl-L-homocysteine + H(+). Its function is as follows. Histone methyltransferase that selectively methylates 'Lys-4' of dimethylated histone H3 (H3K4me2) to produce trimethylated 'Lys-4' histone H3 (H3K4me3). May play a role in epigenetic regulation of gene expression by defining an active chromatin state. The sequence is that of Histone-lysine N-methyltransferase PRDM7 from Homo sapiens (Human).